Here is a 299-residue protein sequence, read N- to C-terminus: Probable lipid kinase YegS (299 aa).

The DAGKc domain maps to 2-133; it reads AEFPASLLIL…IDMAQVNKQT (132 aa). ATP is bound by residues threonine 40, 66-72, and threonine 95; that span reads GDGTINE. Mg(2+) contacts are provided by leucine 215, aspartate 218, and leucine 220. The active-site Proton acceptor is glutamate 271.

Belongs to the diacylglycerol/lipid kinase family. YegS lipid kinase subfamily. Mg(2+) is required as a cofactor. Ca(2+) serves as cofactor.

The protein localises to the cytoplasm. Its function is as follows. Probably phosphorylates lipids; the in vivo substrate is unknown. This Escherichia coli (strain K12 / MC4100 / BW2952) protein is Probable lipid kinase YegS.